Reading from the N-terminus, the 238-residue chain is Ribosomal RNA small subunit methyltransferase G (238 aa).

S-adenosyl-L-methionine is bound by residues glycine 77, phenylalanine 82, 128-129 (AE), and arginine 147.

The protein belongs to the methyltransferase superfamily. RNA methyltransferase RsmG family.

The protein localises to the cytoplasm. Its function is as follows. Specifically methylates the N7 position of guanine in position 535 of 16S rRNA. This chain is Ribosomal RNA small subunit methyltransferase G, found in Geobacillus sp. (strain WCH70).